The sequence spans 386 residues: uncharacterized protein (386 aa).

The segment at 355-386 is disordered; sequence PSEAQKVQVKSNKKPPIAPKPEHLKKRDHGLC. A compositionally biased stretch (basic residues) spans 377-386; the sequence is HLKKRDHGLC.

This is an uncharacterized protein from Rickettsia prowazekii (strain Madrid E).